Here is a 288-residue protein sequence, read N- to C-terminus: Alpha/beta hydrolase domain-containing protein 17B (288 aa).

Catalysis depends on charge relay system residues Ser170, Asp235, and His264. Position 282 is a phosphoserine (Ser282).

It belongs to the AB hydrolase superfamily. ABHD17 family. Post-translationally, palmitoylated on cysteine residues located in a cysteine cluster at the N-terminus which promotes membrane localization. Palmitoylation is required for post-synaptic localization and for depalmitoylating activity towards DLG4/PSD95. Expressed in brain.

The protein resides in the cell membrane. It localises to the recycling endosome membrane. The protein localises to the cell projection. Its subcellular location is the dendritic spine. It is found in the postsynaptic density membrane. It catalyses the reaction S-hexadecanoyl-L-cysteinyl-[protein] + H2O = L-cysteinyl-[protein] + hexadecanoate + H(+). Hydrolyzes fatty acids from S-acylated cysteine residues in proteins. Has depalmitoylating activity towards DLG4/PSD95. Has depalmitoylating activity towards GAP43. Has depalmitoylating activity towards MAP6. Has depalmitoylating activity towards NRAS. The polypeptide is Alpha/beta hydrolase domain-containing protein 17B (Mus musculus (Mouse)).